A 301-amino-acid chain; its full sequence is Nucleotide-binding protein Helmi_06460 (301 aa).

17–24 (GLSGAGKS) lines the ATP pocket. A GTP-binding site is contributed by 68–71 (DIRG).

This sequence belongs to the RapZ-like family.

In terms of biological role, displays ATPase and GTPase activities. This is Nucleotide-binding protein Helmi_06460 from Heliobacterium modesticaldum (strain ATCC 51547 / Ice1).